Reading from the N-terminus, the 244-residue chain is Vesicle-associated membrane protein-associated protein SCS2 (244 aa).

An N-acetylserine modification is found at S2. Over 2 to 222 the chain is Cytoplasmic; the sequence is SAVEISPDVL…EAATVPAENE (221 aa). The MSP domain occupies 3–126; that stretch reads AVEISPDVLV…ISKKIKVKYL (124 aa). S106 carries the post-translational modification Phosphoserine. The tract at residues 135–219 is disordered; sequence QNQNIQENKE…QIKEAATVPA (85 aa). Residues 153-168 show a composition bias toward basic and acidic residues; that stretch reads SEPKEVPAVVNEKEVP. Polar residues predominate over residues 199-211; it reads QTSNSTPAPQNQI. Residues 223–243 form a helical; Anchor for type IV membrane protein membrane-spanning segment; sequence SSSMGIFILVALLILVLGWFY. A topological domain (lumenal) is located at residue R244.

It belongs to the VAMP-associated protein (VAP) (TC 9.B.17) family. Interacts with OPI1. Also interacts with PBI1. Interacts with EPO1.

The protein resides in the endoplasmic reticulum membrane. Its subcellular location is the nucleus membrane. Acts as an endoplasmic reticulum (ER) membrane anchor for cytoplasmic proteins via binding to the FFAT motif of targeted proteins. Regulates phospholipid biosynthesis by modulating the subcellular localization of the transcriptional repressor OPI1. Also contributes to the tethering of the ER to the plasma membrane. Allows interorganelle phosphatidylserine (PtdSer) transport via a process that involves the acceptor membrane complex PDR17-PDS2 that binds to PBI1 which in turn ligates to SCS2 and phosphatidic acid present in the donor membrane, forming a zone of apposition that facilitates PtdSer transfer. This is Vesicle-associated membrane protein-associated protein SCS2 from Saccharomyces cerevisiae (strain ATCC 204508 / S288c) (Baker's yeast).